Here is a 362-residue protein sequence, read N- to C-terminus: 3-dehydroquinate synthase (362 aa).

Residues 70 to 75 (DGEQYK), 104 to 108 (GVIGD), 128 to 129 (TT), lysine 141, and lysine 150 each bind NAD(+). Residues glutamate 183, histidine 246, and histidine 263 each contribute to the Zn(2+) site.

The protein belongs to the sugar phosphate cyclases superfamily. Dehydroquinate synthase family. NAD(+) is required as a cofactor. Co(2+) serves as cofactor. The cofactor is Zn(2+).

The protein resides in the cytoplasm. The catalysed reaction is 7-phospho-2-dehydro-3-deoxy-D-arabino-heptonate = 3-dehydroquinate + phosphate. Its pathway is metabolic intermediate biosynthesis; chorismate biosynthesis; chorismate from D-erythrose 4-phosphate and phosphoenolpyruvate: step 2/7. Catalyzes the conversion of 3-deoxy-D-arabino-heptulosonate 7-phosphate (DAHP) to dehydroquinate (DHQ). The polypeptide is 3-dehydroquinate synthase (Pasteurella multocida (strain Pm70)).